We begin with the raw amino-acid sequence, 153 residues long: T cell receptor delta constant (153 aa).

Asn14 carries N-linked (GlcNAc...) asparagine glycosylation. An intrachain disulfide couples Cys20 to Cys71. The N-linked (GlcNAc...) asparagine glycan is linked to Asn77. The span at 85–102 shows a compositional bias: basic and acidic residues; it reads FEVKTDSTDHVKPKETEN. The interval 85–112 is disordered; it reads FEVKTDSTDHVKPKETENTKQPSKSCHK. Residues 130 to 152 form a helical membrane-spanning segment; sequence LGLRMLFAKTVAVNFLLTAKLFF.

As to quaternary structure, gamma-delta TR is a heterodimer composed of a gamma and delta chain; disulfide-linked. The gamma-delta TR is associated with the transmembrane signaling CD3 coreceptor proteins following the stoichiometry: a single gamma-delta TR heterodimer associates with one CD3D-CD3E heterodimer, one CD3G-CD3E heterodimer and one CD247 homodimer forming a stable octameric structure. Upon activation, gamma-delta TR complex associates with FCER1G to initiate intracellular signaling.

It is found in the cell membrane. Functionally, constant region of T cell receptor (TR) delta chain that participates in the antigen recognition. Gamma-delta TRs recognize a variety of self and foreign non-peptide antigens frequently expressed at the epithelial boundaries between the host and external environment, including endogenous lipids presented by MH-like protein CD1D and phosphoantigens presented by butyrophilin-like molecule BTN3A1. Upon antigen recognition induces rapid, innate-like immune responses involved in pathogen clearance and tissue repair. Binding of gamma-delta TR complex to antigen triggers phosphorylation of immunoreceptor tyrosine-based activation motifs (ITAMs) in the CD3 chains by the LCK and FYN kinases, allowing the recruitment, phosphorylation, and activation of ZAP70 that facilitates phosphorylation of the scaffolding proteins LCP2 and LAT. This lead to the formation of a supramolecular signalosome that recruits the phospholipase PLCG1, resulting in calcium mobilization and ERK activation, ultimately leading to T cell expansion and differentiation into effector cells. Gamma-delta TRs are produced through somatic rearrangement of a limited repertoire of variable (V), diversity (D), and joining (J) genes. The potential diversity of gamma-delta TRs is conferred by the unique ability to rearrange (D) genes in tandem and to utilize all three reading frames. The combinatorial diversity is considerably increased by the sequence exonuclease trimming and random nucleotide (N) region additions which occur during the V-(D)-J rearrangements. The protein is T cell receptor delta constant of Homo sapiens (Human).